A 71-amino-acid chain; its full sequence is DNA-directed RNA polymerases II, IV and V subunit 10 (71 aa).

Positions 7, 10, 44, and 45 each coordinate Zn(2+).

This sequence belongs to the archaeal Rpo10/eukaryotic RPB10 RNA polymerase subunit family. Component of the RNA polymerase II, IV and V complexes. Interacts with NRPD1.

The protein localises to the nucleus. In terms of biological role, DNA-dependent RNA polymerase catalyzes the transcription of DNA into RNA using the four ribonucleoside triphosphates as substrates. Component of RNA polymerase II which synthesizes mRNA precursors and many functional non-coding RNAs. Pol II is the central component of the basal RNA polymerase II transcription machinery. It is composed of mobile elements that move relative to each other. Component of RNA polymerases IV and V which mediate short-interfering RNAs (siRNA) accumulation and subsequent RNA-directed DNA methylation-dependent (RdDM) transcriptional gene silencing (TGS) of endogenous repeated sequences, including transposable elements. This Arabidopsis thaliana (Mouse-ear cress) protein is DNA-directed RNA polymerases II, IV and V subunit 10 (NRPB10).